Consider the following 615-residue polypeptide: DNA mismatch repair protein MutL (615 aa).

Positions 363-397 are disordered; that stretch reads FAEPAAREPVAPRYTPAPASGSRPAAPWPNAQPGY. The segment covering 364-391 has biased composition (low complexity); it reads AEPAAREPVAPRYTPAPASGSRPAAPWP.

Belongs to the DNA mismatch repair MutL/HexB family.

In terms of biological role, this protein is involved in the repair of mismatches in DNA. It is required for dam-dependent methyl-directed DNA mismatch repair. May act as a 'molecular matchmaker', a protein that promotes the formation of a stable complex between two or more DNA-binding proteins in an ATP-dependent manner without itself being part of a final effector complex. The protein is DNA mismatch repair protein MutL of Shigella boydii serotype 4 (strain Sb227).